The primary structure comprises 269 residues: Pyrroline-5-carboxylate reductase (269 aa).

Belongs to the pyrroline-5-carboxylate reductase family.

The protein localises to the cytoplasm. It carries out the reaction L-proline + NADP(+) = (S)-1-pyrroline-5-carboxylate + NADPH + 2 H(+). The enzyme catalyses L-proline + NAD(+) = (S)-1-pyrroline-5-carboxylate + NADH + 2 H(+). The protein operates within amino-acid biosynthesis; L-proline biosynthesis; L-proline from L-glutamate 5-semialdehyde: step 1/1. Its activity is regulated as follows. Inhibited by p-chloromercuribenzoate. Catalyzes the reduction of 1-pyrroline-5-carboxylate (PCA) to L-proline. Does not catalyze the reverse reaction. The protein is Pyrroline-5-carboxylate reductase of Escherichia coli (strain K12).